The chain runs to 529 residues: Bifunctional purine biosynthesis protein PurH (529 aa).

One can recognise an MGS-like domain in the interval 2–149; the sequence is TNLVPVGRAL…KNHRFVNVVT (148 aa).

It belongs to the PurH family.

It catalyses the reaction (6R)-10-formyltetrahydrofolate + 5-amino-1-(5-phospho-beta-D-ribosyl)imidazole-4-carboxamide = 5-formamido-1-(5-phospho-D-ribosyl)imidazole-4-carboxamide + (6S)-5,6,7,8-tetrahydrofolate. The enzyme catalyses IMP + H2O = 5-formamido-1-(5-phospho-D-ribosyl)imidazole-4-carboxamide. It participates in purine metabolism; IMP biosynthesis via de novo pathway; 5-formamido-1-(5-phospho-D-ribosyl)imidazole-4-carboxamide from 5-amino-1-(5-phospho-D-ribosyl)imidazole-4-carboxamide (10-formyl THF route): step 1/1. It functions in the pathway purine metabolism; IMP biosynthesis via de novo pathway; IMP from 5-formamido-1-(5-phospho-D-ribosyl)imidazole-4-carboxamide: step 1/1. The chain is Bifunctional purine biosynthesis protein PurH from Cereibacter sphaeroides (strain ATCC 17029 / ATH 2.4.9) (Rhodobacter sphaeroides).